Here is a 306-residue protein sequence, read N- to C-terminus: Secreted RxLR effector protein 76 (306 aa).

An N-terminal signal peptide occupies residues 1-21 (MSGAFYVFTALLLVASDQIAA). A RxLR-dEER motif is present at residues 48-65 (RFLRGSRDEPDNLANEER). The interval 105–142 (AAKAVKKRPRGAKAGRKMPRAAEAEAVKKVPRAGTAVK) is disordered. A compositionally biased stretch (basic residues) spans 107–123 (KAVKKRPRGAKAGRKMP).

Belongs to the RxLR effector family.

Its subcellular location is the secreted. It localises to the host nucleus. Secreted effector that partially suppresses the host cell death induced by cell death-inducing proteins. This is Secreted RxLR effector protein 76 from Plasmopara viticola (Downy mildew of grapevine).